We begin with the raw amino-acid sequence, 149 residues long: Transcriptional repressor NrdR (149 aa).

Residues 3–34 (CPFCGTQDTKVIDSRLVADGASVRRRRECNHC) fold into a zinc finger. Residues 49 to 139 (PRVIKTDGSR…VYRSFEDIRE (91 aa)) form the ATP-cone domain.

This sequence belongs to the NrdR family. The cofactor is Zn(2+).

Its function is as follows. Negatively regulates transcription of bacterial ribonucleotide reductase nrd genes and operons by binding to NrdR-boxes. The protein is Transcriptional repressor NrdR of Idiomarina loihiensis (strain ATCC BAA-735 / DSM 15497 / L2-TR).